We begin with the raw amino-acid sequence, 360 residues long: Cysteine proteinase 2 (360 aa).

The signal sequence occupies residues 1-19; sequence MVPRRLFVLAVVVLADTAA. Positions 20 to 142 are cleaved as a propeptide — activation peptide; it reads VVNSGFADSN…NHRMRAAAVA (123 aa). A glycan (N-linked (GlcNAc...) asparagine) is linked at Asn125. 2 disulfides stabilise this stretch: Cys164–Cys207 and Cys198–Cys240. The active site involves Cys167. The N-linked (GlcNAc...) asparagine glycan is linked to Asn256. The cysteines at positions 298 and 348 are disulfide-linked. Active-site residues include His307 and Asn327.

The protein belongs to the peptidase C1 family. In terms of tissue distribution, expressed at the onset of germination.

The protein resides in the vacuole. Its function is as follows. Involved in the degradation of the storage protein zein. May play a role in proteolysis during emergencies. This chain is Cysteine proteinase 2 (CCP2), found in Zea mays (Maize).